The following is a 117-amino-acid chain: Ribosomal silencing factor RsfS (117 aa).

Belongs to the Iojap/RsfS family. As to quaternary structure, interacts with ribosomal protein uL14 (rplN).

It localises to the cytoplasm. In terms of biological role, functions as a ribosomal silencing factor. Interacts with ribosomal protein uL14 (rplN), blocking formation of intersubunit bridge B8. Prevents association of the 30S and 50S ribosomal subunits and the formation of functional ribosomes, thus repressing translation. The protein is Ribosomal silencing factor RsfS of Halalkalibacterium halodurans (strain ATCC BAA-125 / DSM 18197 / FERM 7344 / JCM 9153 / C-125) (Bacillus halodurans).